A 297-amino-acid polypeptide reads, in one-letter code: 4-diphosphocytidyl-2-C-methyl-D-erythritol kinase (297 aa).

Lysine 10 is a catalytic residue. Residue 94-104 coordinates ATP; the sequence is PVAAGLAGGSS. Residue aspartate 136 is part of the active site.

It belongs to the GHMP kinase family. IspE subfamily.

It carries out the reaction 4-CDP-2-C-methyl-D-erythritol + ATP = 4-CDP-2-C-methyl-D-erythritol 2-phosphate + ADP + H(+). It functions in the pathway isoprenoid biosynthesis; isopentenyl diphosphate biosynthesis via DXP pathway; isopentenyl diphosphate from 1-deoxy-D-xylulose 5-phosphate: step 3/6. Catalyzes the phosphorylation of the position 2 hydroxy group of 4-diphosphocytidyl-2C-methyl-D-erythritol. The protein is 4-diphosphocytidyl-2-C-methyl-D-erythritol kinase of Shouchella clausii (strain KSM-K16) (Alkalihalobacillus clausii).